A 616-amino-acid chain; its full sequence is Alpha terpineol synthase, chloroplastic (616 aa).

The transit peptide at 1–41 directs the protein to the chloroplast; the sequence is MALLSVAPLQKPLTSCSPFSTTMPTLGVCTPRKVVTPSIIM. The Mg(2+) site is built by D367, D371, and D519. Positions 367 to 371 match the DDXXD motif motif; that stretch reads DDIYD.

Belongs to the terpene synthase family. Tpsd subfamily. The cofactor is Mg(2+). Mn(2+) is required as a cofactor.

Its subcellular location is the plastid. It is found in the chloroplast. The enzyme catalyses (2E)-geranyl diphosphate + H2O = (S)-alpha-terpineol + diphosphate. The catalysed reaction is (2E)-geranyl diphosphate + H2O = 1,8-cineole + diphosphate. It carries out the reaction (2E)-geranyl diphosphate = beta-myrcene + diphosphate. It catalyses the reaction (2E)-geranyl diphosphate = (1S,5S)-sabinene + diphosphate. The protein operates within terpene metabolism; oleoresin biosynthesis. Its pathway is secondary metabolite biosynthesis; terpenoid biosynthesis. In terms of biological role, monoterpene synthase (TPS) involved in the biosynthesis of monoterpene natural products included in conifer oleoresin secretions and volatile emissions; these compounds contribute to biotic and abiotic stress defense against herbivores and pathogens. Catalyzes the conversion of (2E)-geranyl diphosphate (GPP) to alpha-terpineol and, to a lower extent, to 1,8-cineole, myrcene and (-)-sabinene. The chain is Alpha terpineol synthase, chloroplastic from Pinus contorta (Shore pine).